We begin with the raw amino-acid sequence, 408 residues long: Tripartite motif-containing protein 59 (408 aa).

The segment at 10-60 adopts an RING-type zinc-finger fold; sequence CSICYSLFEDPRVLPCSHTFCRSCLEGVIQLSSNFSIWRPLRVPLKCPNCR. Residues 92–134 form a B box-type zinc finger; sequence SDVATCSEHYRQPLNVYCLLDKKLVCGHCLTIGKHNGHPIDDL. Residues cysteine 97, histidine 100, cysteine 120, and histidine 126 each coordinate Zn(2+). Residues 163 to 247 adopt a coiled-coil conformation; it reads LIEKLKEQKA…LNTSIQKEES (85 aa). The helical transmembrane segment at 333 to 353 threads the bilayer; sequence ANPLSVTFIFTVIIAIAVLSF.

The protein belongs to the TRIM/RBCC family. Interacts with ECSIT.

The protein resides in the endoplasmic reticulum membrane. In terms of biological role, may serve as a multifunctional regulator for innate immune signaling pathways. This chain is Tripartite motif-containing protein 59 (TRIM59), found in Gallus gallus (Chicken).